An 835-amino-acid chain; its full sequence is Telomere length regulation protein TEL2 homolog (835 aa).

Disordered stretches follow at residues 455–501 and 629–648; these read SADC…LAPY and LSHE…HSIR. A compositionally biased stretch (low complexity) spans 464–473; the sequence is ESSPSKSCPK. Residues 474–486 show a composition bias toward basic and acidic residues; it reads AIEKSKMEAKADQ. A compositionally biased stretch (acidic residues) spans 488–499; it reads SDSELDSDDDLA. Positions 636–648 are enriched in polar residues; it reads ESRSTGTGQHSIR.

The protein belongs to the TEL2 family.

Its subcellular location is the cytoplasm. The protein localises to the membrane. It is found in the nucleus. It localises to the chromosome. The protein resides in the telomere. Functionally, regulator of the DNA damage response (DDR). Part of the TTT complex that is required to stabilize protein levels of the phosphatidylinositol 3-kinase-related protein kinase (PIKK) family proteins. Promotes assembly, stabilizes and maintains the activity of TORC complexes, which regulate cell growth and survival in response to nutrient and hormonal signals. May be involved in telomere length regulation. The sequence is that of Telomere length regulation protein TEL2 homolog (telo2) from Xenopus laevis (African clawed frog).